The chain runs to 560 residues: Membrane protein insertase YidC (560 aa).

A run of 6 helical transmembrane segments spans residues 5–25, 334–354, 357–377, 431–451, 476–496, and 522–542; these read IINLIAAIILSLSIIFGWQYF, AIDFGWFYIITKPVFYAMNFF, YVGNFGVSILIVTVIIKLLMF, LPILVQIPLFFSIYKVLYVTI, LFGLLPFSPPSFLMIGAWPIL, and FMPLIFLFMFSSFPVGLLIYW.

It belongs to the OXA1/ALB3/YidC family. Type 1 subfamily. As to quaternary structure, interacts with the Sec translocase complex via SecD. Specifically interacts with transmembrane segments of nascent integral membrane proteins during membrane integration.

It is found in the cell inner membrane. In terms of biological role, required for the insertion and/or proper folding and/or complex formation of integral membrane proteins into the membrane. Involved in integration of membrane proteins that insert both dependently and independently of the Sec translocase complex, as well as at least some lipoproteins. Aids folding of multispanning membrane proteins. This chain is Membrane protein insertase YidC, found in Rickettsia felis (strain ATCC VR-1525 / URRWXCal2) (Rickettsia azadi).